Here is a 350-residue protein sequence, read N- to C-terminus: 4-hydroxy-2-oxovalerate aldolase 3 (350 aa).

The Pyruvate carboxyltransferase domain occupies 13–265 (VVFHDMCLRD…DTGVDLFRLM (253 aa)). 21 to 22 (RD) provides a ligand contact to substrate. Position 22 (D22) interacts with Mn(2+). Catalysis depends on H25, which acts as the Proton acceptor. Substrate contacts are provided by S175 and H204. Positions 204 and 206 each coordinate Mn(2+). Y295 contributes to the substrate binding site.

Belongs to the 4-hydroxy-2-oxovalerate aldolase family.

The enzyme catalyses (S)-4-hydroxy-2-oxopentanoate = acetaldehyde + pyruvate. The protein is 4-hydroxy-2-oxovalerate aldolase 3 (lapG) of Azotobacter vinelandii (strain DJ / ATCC BAA-1303).